The sequence spans 752 residues: Zinc finger BED domain-containing protein RICESLEEPER 3 (752 aa).

The BED-type zinc finger occupies 106 to 166 (RKKSVVWEHF…ASCPMLKNED (61 aa)). Zn(2+)-binding residues include Cys-129, Cys-132, His-153, and Cys-159. Residues 647–733 (ELEQYLEEAL…EALFCAKDWL (87 aa)) are HATC (Hobo-Ac-Tam3) domain.

Homodimer.

The protein localises to the nucleus. Transposase-like protein that is essential for plant growth and development. May regulate global gene expression by recruiting other cellular factors. The protein is Zinc finger BED domain-containing protein RICESLEEPER 3 of Oryza sativa subsp. japonica (Rice).